Reading from the N-terminus, the 176-residue chain is Large ribosomal subunit protein uL30 (176 aa).

Belongs to the universal ribosomal protein uL30 family. As to quaternary structure, part of the 50S ribosomal subunit.

The sequence is that of Large ribosomal subunit protein uL30 from Pyrobaculum arsenaticum (strain DSM 13514 / JCM 11321 / PZ6).